The following is a 464-amino-acid chain: Protein ABHD18 (464 aa).

The first 24 residues, Met-1 to Gly-24, serve as a signal peptide directing secretion. Asn-341 carries an N-linked (GlcNAc...) asparagine glycan.

The protein belongs to the AB hydrolase superfamily.

It is found in the secreted. The chain is Protein ABHD18 from Rattus norvegicus (Rat).